Reading from the N-terminus, the 261-residue chain is uncharacterized protein (261 aa).

An ATP-binding site is contributed by 41–48; it reads GKSGSGKS.

It belongs to the IIV-6 075L family.

This is an uncharacterized protein from Invertebrate iridescent virus 3 (IIV-3).